We begin with the raw amino-acid sequence, 225 residues long: ATP-dependent Clp protease proteolytic subunit (225 aa).

The Nucleophile role is filled by Ser-123. His-148 is an active-site residue.

It belongs to the peptidase S14 family. Fourteen ClpP subunits assemble into 2 heptameric rings which stack back to back to give a disk-like structure with a central cavity, resembling the structure of eukaryotic proteasomes.

The protein localises to the cytoplasm. It catalyses the reaction Hydrolysis of proteins to small peptides in the presence of ATP and magnesium. alpha-casein is the usual test substrate. In the absence of ATP, only oligopeptides shorter than five residues are hydrolyzed (such as succinyl-Leu-Tyr-|-NHMec, and Leu-Tyr-Leu-|-Tyr-Trp, in which cleavage of the -Tyr-|-Leu- and -Tyr-|-Trp bonds also occurs).. Functionally, cleaves peptides in various proteins in a process that requires ATP hydrolysis. Has a chymotrypsin-like activity. Plays a major role in the degradation of misfolded proteins. This Chlorobium chlorochromatii (strain CaD3) protein is ATP-dependent Clp protease proteolytic subunit.